A 251-amino-acid chain; its full sequence is MSGHSKWATTKHKKAAIDAKRGKLFAKLIKNIEIAARLGGGDPDGNPSLYDAIYKAKKASMPADNIARAVKRGAGDEDGAANYEDIVYEGYAPAGVGLIIECLTDNRNRAAAEVRSTLTKGNGSLATSGSVSFNFERKGQIVVPSEGVDFDKLFETAAEAGAEDVTDDDEVYTVITGPSDLFTVRKALQDAGFDYDSADQVMQPKNEVELSLEDARKVSKLIDNLDDLDDVQNIYSNWTASDEVMAQLDEE.

This sequence belongs to the TACO1 family.

The protein resides in the cytoplasm. The protein is Probable transcriptional regulatory protein Blon_1155/BLIJ_1182 of Bifidobacterium longum subsp. infantis (strain ATCC 15697 / DSM 20088 / JCM 1222 / NCTC 11817 / S12).